The following is a 1259-amino-acid chain: Zinc finger protein BRUTUS-like At1g74770 (1259 aa).

The chain crosses the membrane as a helical span at residues 441–461; sequence LLYTSIHVLPLGLLKCVILWF. Composition is skewed to basic and acidic residues over residues 904 to 916 and 924 to 934; these read KEEK…ESKK and EGDKEQTDKMS. The disordered stretch occupies residues 904 to 938; sequence KEEKDLERSESKKICRGSNQEGDKEQTDKMSQKVS. The segment at 1018–1087 adopts a CHY-type zinc-finger fold; that stretch reads PHSLIFGCNH…ANCSNTSCKS (70 aa). Residues Cys1025, His1027, Cys1038, Cys1039, Cys1045, Cys1048, His1049, His1055, Cys1067, Cys1070, Cys1080, Cys1085, Cys1094, Cys1097, His1108, Cys1109, Cys1112, Cys1115, His1127, Cys1128, Cys1131, Cys1134, His1142, and Cys1144 each coordinate Zn(2+). The CTCHY-type zinc-finger motif lies at 1089–1152; that stretch reads MGKYFCKICK…VCREKCLEDN (64 aa). The RING-type; atypical zinc finger occupies 1153–1195; that stretch reads CPICHEYIFTSSSPVKALPCGHLMHSTCFQEYTCSHYTCPVCS.

Binds zinc and iron ions.

It is found in the membrane. Its subcellular location is the nucleus. It participates in protein modification; protein ubiquitination. Its function is as follows. Probable E3 ubiquitin-protein ligase that may regulate the response to iron deficiency and thus contributes to iron homeostasis. The protein is Zinc finger protein BRUTUS-like At1g74770 of Arabidopsis thaliana (Mouse-ear cress).